A 311-amino-acid polypeptide reads, in one-letter code: tRNA-cytidine(32) 2-sulfurtransferase (311 aa).

The PP-loop motif signature appears at 47-52; the sequence is SGGKDS. Residues cysteine 122, cysteine 125, and cysteine 213 each coordinate [4Fe-4S] cluster.

Belongs to the TtcA family. As to quaternary structure, homodimer. The cofactor is Mg(2+). [4Fe-4S] cluster serves as cofactor.

Its subcellular location is the cytoplasm. The catalysed reaction is cytidine(32) in tRNA + S-sulfanyl-L-cysteinyl-[cysteine desulfurase] + AH2 + ATP = 2-thiocytidine(32) in tRNA + L-cysteinyl-[cysteine desulfurase] + A + AMP + diphosphate + H(+). It functions in the pathway tRNA modification. Catalyzes the ATP-dependent 2-thiolation of cytidine in position 32 of tRNA, to form 2-thiocytidine (s(2)C32). The sulfur atoms are provided by the cysteine/cysteine desulfurase (IscS) system. This is tRNA-cytidine(32) 2-sulfurtransferase from Escherichia coli (strain K12 / MC4100 / BW2952).